We begin with the raw amino-acid sequence, 877 residues long: Leucine--tRNA ligase (877 aa).

Residues 43 to 53 (PYPSGRIHMGH) carry the 'HIGH' region motif. The short motif at 628–632 (KMSKS) is the 'KMSKS' region element. Lys631 serves as a coordination point for ATP.

The protein belongs to the class-I aminoacyl-tRNA synthetase family.

Its subcellular location is the cytoplasm. The enzyme catalyses tRNA(Leu) + L-leucine + ATP = L-leucyl-tRNA(Leu) + AMP + diphosphate. The chain is Leucine--tRNA ligase from Brucella abortus (strain S19).